Consider the following 84-residue polypeptide: Putative membrane protein insertion efficiency factor (84 aa).

It belongs to the UPF0161 family.

The protein resides in the cell inner membrane. In terms of biological role, could be involved in insertion of integral membrane proteins into the membrane. The sequence is that of Putative membrane protein insertion efficiency factor from Shewanella denitrificans (strain OS217 / ATCC BAA-1090 / DSM 15013).